The sequence spans 371 residues: Cytochrome b (371 aa).

4 helical membrane passes run 25-45, 69-90, 105-125, and 170-190; these read FGSM…FLAV, WMMQ…YIHI, WLSG…GYVL, and FFAL…LHIM. 2 residues coordinate heme b: histidine 75 and histidine 89. Positions 174 and 188 each coordinate heme b. Histidine 193 is an a ubiquinone binding site. Helical transmembrane passes span 218–238, 280–300, 312–332, and 339–358; these read YKDL…VSFL, LWGA…PFTH, IMQL…WAAT, and FTMI…IMNP.

The protein belongs to the cytochrome b family. In terms of assembly, the cytochrome bc1 complex contains 3 respiratory subunits (MT-CYB, CYC1 and UQCRFS1), 2 core proteins (UQCRC1 and UQCRC2) and probably 6 low-molecular weight proteins. Requires heme b as cofactor.

It localises to the mitochondrion inner membrane. Its function is as follows. Component of the ubiquinol-cytochrome c reductase complex (complex III or cytochrome b-c1 complex) that is part of the mitochondrial respiratory chain. The b-c1 complex mediates electron transfer from ubiquinol to cytochrome c. Contributes to the generation of a proton gradient across the mitochondrial membrane that is then used for ATP synthesis. This Eryx miliaris nogaiorum (Black sand boa) protein is Cytochrome b (MT-CYB).